The chain runs to 188 residues: Putative pre-16S rRNA nuclease (188 aa).

A disordered region spans residues 144 to 188 (HAPGRVVAGPKGRRKARHRGQGGTGTEQQADAGGRARPHATEGKG). The span at 154-163 (KGRRKARHRG) shows a compositional bias: basic residues.

The protein belongs to the YqgF nuclease family.

Its subcellular location is the cytoplasm. Functionally, could be a nuclease involved in processing of the 5'-end of pre-16S rRNA. This Kineococcus radiotolerans (strain ATCC BAA-149 / DSM 14245 / SRS30216) protein is Putative pre-16S rRNA nuclease.